Here is a 528-residue protein sequence, read N- to C-terminus: Na(+)/H(+) antiporter NhaB (528 aa).

The next 10 helical transmembrane spans lie at 11 to 31 (VNFL…FLVI), 67 to 87 (PGGL…SQVL), 98 to 118 (LLLI…LFVF), 140 to 160 (AFLS…AVGI), 240 to 260 (FFIR…LTCV), 311 to 331 (LVAG…SVII), 350 to 370 (EEAL…GVII), 391 to 411 (LVVF…VFVG), 449 to 469 (ATPN…APLI), and 476 to 496 (MVIM…VTIE).

The protein belongs to the NhaB Na(+)/H(+) (TC 2.A.34) antiporter family.

It is found in the cell inner membrane. It catalyses the reaction 2 Na(+)(in) + 3 H(+)(out) = 2 Na(+)(out) + 3 H(+)(in). Its function is as follows. Na(+)/H(+) antiporter that extrudes sodium in exchange for external protons. The polypeptide is Na(+)/H(+) antiporter NhaB (Shewanella denitrificans (strain OS217 / ATCC BAA-1090 / DSM 15013)).